The sequence spans 625 residues: Exonuclease mut-7 homolog (625 aa).

Serine 17 carries the phosphoserine modification. The 3'-5' exonuclease domain occupies 410-602 (LIIVNKADEF…IYNTLIERVS (193 aa)).

The protein belongs to the mut-7 family. As to quaternary structure, interacts with AGO1; the interaction is not RNA dependent. The cofactor is Mg(2+).

Possesses 3'-5' exoribonuclease activity. Required for 3'-end trimming of AGO1-bound miRNAs, in particular multiple-isoform miRNAs, which represents a critical step in miRNA maturation. This is Exonuclease mut-7 homolog (Nbr) from Drosophila melanogaster (Fruit fly).